The chain runs to 518 residues: DNA-(apurinic or apyrimidinic site) endonuclease 2 (518 aa).

The Mg(2+) site is built by N8 and E48. Residue Y156 is part of the active site. Mg(2+) is bound by residues D197, N199, D303, and H304. D197 acts as the Proton donor/acceptor in catalysis. H304 acts as the Proton acceptor in catalysis. The span at 355 to 405 (STLQHNNQTRVQTCQNKAQVRSTRPQPSQVGSSRGQKNLKSYFQPSPSCPQ) shows a compositional bias: polar residues. The tract at residues 355–407 (STLQHNNQTRVQTCQNKAQVRSTRPQPSQVGSSRGQKNLKSYFQPSPSCPQAS) is disordered. K371 participates in a covalent cross-link: Glycyl lysine isopeptide (Lys-Gly) (interchain with G-Cter in ubiquitin). Residues 390 to 397 (QKNLKSYF) form a required for the interaction and colocalization with PCNA in nuclear foci in presence of oxidative-induced DNA damaging agents region. Zn(2+)-binding residues include C469, H472, C495, and C509. Residues 469 to 518 (CGGHREPCVMRTVKKPGPNLGRRFYMCARPRGPPTDPSSRCNFFLWSRPS) form a GRF-type zinc finger.

The protein belongs to the DNA repair enzymes AP/ExoA family. As to quaternary structure, interacts with PCNA; this interaction is triggered by reactive oxygen species and increased by misincorporation of uracil in nuclear DNA. The cofactor is Mg(2+). Mn(2+) is required as a cofactor. Ubiquitinated by the CUL9-RBX1 complex. Ubiquitinated by MKRN3 at Lys-371 leading to proteasomal degradation. Highly expressed in brain and kidney. Weakly expressed in the fetal brain.

The protein resides in the nucleus. It is found in the cytoplasm. The protein localises to the mitochondrion. It catalyses the reaction Exonucleolytic cleavage in the 3'- to 5'-direction to yield nucleoside 5'-phosphates.. With respect to regulation, 3'-5' exonuclease activity is activated by sodium and manganese. 3'-5' exonuclease and 3'-phosphodiesterase activities are stimulated in presence of PCNA. In terms of biological role, functions as a weak apurinic/apyrimidinic (AP) endodeoxyribonuclease in the DNA base excision repair (BER) pathway of DNA lesions induced by oxidative and alkylating agents. Initiates repair of AP sites in DNA by catalyzing hydrolytic incision of the phosphodiester backbone immediately adjacent to the damage, generating a single-strand break with 5'-deoxyribose phosphate and 3'-hydroxyl ends. Also displays double-stranded DNA 3'-5' exonuclease, 3'-phosphodiesterase activities. Shows robust 3'-5' exonuclease activity on 3'-recessed heteroduplex DNA and is able to remove mismatched nucleotides preferentially. Also exhibits 3'-5' exonuclease activity on a single nucleotide gap containing heteroduplex DNA and on blunt-ended substrates. Shows fairly strong 3'-phosphodiesterase activity involved in the removal of 3'-damaged termini formed in DNA by oxidative agents. In the nucleus functions in the PCNA-dependent BER pathway. Plays a role in reversing blocked 3' DNA ends, problematic lesions that preclude DNA synthesis. Required for somatic hypermutation (SHM) and DNA cleavage step of class switch recombination (CSR) of immunoglobulin genes. Required for proper cell cycle progression during proliferation of peripheral lymphocytes. The polypeptide is DNA-(apurinic or apyrimidinic site) endonuclease 2 (APEX2) (Homo sapiens (Human)).